The following is a 168-amino-acid chain: Cytolysin secretion protein (168 aa).

This is Cytolysin secretion protein (vvhB) from Vibrio vulnificus (strain CMCP6).